We begin with the raw amino-acid sequence, 185 residues long: MDDGVEAKPLCLTREQIDKQVERLSRRPEQRTLPDPFPVCPTVRMSKEQLEQVTKRVFYHYSEKHAEALRLAEERREKECGVASTVLSASDVDDIVKRLYYEGMERVKVGRKEASDRLLFKSTKVLPVISLKRFVNDMYLRGLEREKKKEEKLYEKYILPTEIPNLRISKSQAAESAMRLSRRHE.

This is an uncharacterized protein from Trypanosoma brucei brucei.